Reading from the N-terminus, the 381-residue chain is Fatty acid elongase 6 (381 aa).

A run of 7 helical transmembrane segments spans residues 10–30, 69–89, 107–127, 153–173, 182–202, 216–236, and 280–300; these read IAAA…LVYS, LPYL…SLIV, GLVH…GLMI, LIWL…IMLL, FLHV…LLVA, GVHV…SGIV, and LLQI…NFLV. The HxxHH motif motif lies at 184-188; sequence HVYHH. The active-site Nucleophile is H187. A disordered region spans residues 362-381; the sequence is RKNGNGNGQKASLQAMAGSR.

The protein belongs to the ELO family.

The protein localises to the membrane. Its pathway is lipid metabolism; polyunsaturated fatty acid biosynthesis. Involved in the synthesis of fatty acids. Elongates C18 polyunsaturated fatty acids (PUFAs) with a preference for Delta6 PUFAs. This is Fatty acid elongase 6 from Leishmania major.